An 813-amino-acid chain; its full sequence is Sorting nexin-29 (813 aa).

The 145-residue stretch at 36-180 folds into the RUN domain; sequence SDSDSRVTCL…ILFAINIDNK (145 aa). A phosphoserine mark is found at Ser-268, Ser-291, Ser-292, Ser-330, and Ser-344. A disordered region spans residues 269-299; it reads FDDEEDEQNSGDVFKKTPGAGESSEDNSDRS. Positions 346-357 are enriched in acidic residues; it reads DDEDVDENEDDV. Residues 346–378 are disordered; the sequence is DDEDVDENEDDVYGNSSGRKHRGHSESPEKPLE. Ser-445 and Ser-450 each carry phosphoserine. Residues 466–545 adopt a coiled-coil conformation; it reads TISELRQATV…VLKVQLKKYV (80 aa). Ser-639 carries the post-translational modification Phosphoserine. Thr-641 is modified (phosphothreonine). 2 positions are modified to phosphoserine: Ser-642 and Ser-646. The PX domain occupies 656 to 779; the sequence is ALINVWIPSV…PFFVDITPPG (124 aa). Residues 778 to 813 are disordered; the sequence is PGEPVNSRPKAASRFPKLSRGQPRETRNVEPQSGDL.

The protein belongs to the sorting nexin family.

This chain is Sorting nexin-29 (SNX29), found in Homo sapiens (Human).